The following is a 604-amino-acid chain: Elongation factor 4 (604 aa).

Residues 7 to 189 (SKIRNFCIIA…SIVHLVPPPS (183 aa)) form the tr-type G domain. GTP contacts are provided by residues 19-24 (DHGKST) and 136-139 (NKID).

Belongs to the TRAFAC class translation factor GTPase superfamily. Classic translation factor GTPase family. LepA subfamily.

The protein localises to the cell inner membrane. The enzyme catalyses GTP + H2O = GDP + phosphate + H(+). Its function is as follows. Required for accurate and efficient protein synthesis under certain stress conditions. May act as a fidelity factor of the translation reaction, by catalyzing a one-codon backward translocation of tRNAs on improperly translocated ribosomes. Back-translocation proceeds from a post-translocation (POST) complex to a pre-translocation (PRE) complex, thus giving elongation factor G a second chance to translocate the tRNAs correctly. Binds to ribosomes in a GTP-dependent manner. This Synechococcus elongatus (strain ATCC 33912 / PCC 7942 / FACHB-805) (Anacystis nidulans R2) protein is Elongation factor 4.